We begin with the raw amino-acid sequence, 299 residues long: MSANDRAIETLRREIAKLQTDGAAIARKDAGIRAKLASAMAAQAKAKTAPALRLKQAEASRLEKELMATSKSQADIATKIAKKQSSLSAKLVVQANEAKKADAKAKKNQERVSKTQEEATRKLEAGYRKLTLENQSLEQRLQRELSAMKPTAGPTTNADLTSAPPHDIFISHAWEDKADFVEALAHTLRAAGAEVWYDDFSLRPGDSLRRSIDKGLGSSRFGIVVLSTHFFKKEWPQKELDGLFQLESSGRSRILPIWHKVSKDEVASFSPTMADKLAFNTSTKSVDEIVADLMAIIRD.

Residues 164–297 enclose the TIR domain; the sequence is PPHDIFISHA…EIVADLMAII (134 aa). Residues 173 to 174 and Arg203 each bind NAD(+); that span reads AW. Residue Glu239 is part of the active site.

As to quaternary structure, homodimer. Interacts with host MYD88.

The enzyme catalyses NAD(+) + H2O = ADP-D-ribose + nicotinamide + H(+). Its function is as follows. NAD(+) hydrolase (NADase) that catalyzes cleavage of NAD(+) into ADP-D-ribose (ADPR) and nicotinamide. The sequence is that of NAD(+) hydrolase PdTIR from Paracoccus denitrificans (strain Pd 1222).